We begin with the raw amino-acid sequence, 165 residues long: MAESFSFDVVSDFDRQELVNTLDQVKREISQRYDLKDTDTLVDLDKENIFIITNSELTLNAVNDIIRQKAIKRNLSLKIFDYGDIEIVSGNKIKQTILLKQGIKQEIAKKISKNIRDQIKKINVSINGETLRVASKSKNDLQLAIKIVSELEESLNIPLKANNFR.

It belongs to the YajQ family.

Nucleotide-binding protein. The sequence is that of Nucleotide-binding protein P9301_05061 from Prochlorococcus marinus (strain MIT 9301).